The sequence spans 645 residues: 1,4-alpha-glucan branching enzyme GlgB (645 aa).

The active-site Nucleophile is the aspartate 309. Glutamate 352 (proton donor) is an active-site residue. The tract at residues 619–645 (VKTRKGSKKQDGSKTKVRSNVTSRGKR) is disordered. A compositionally biased stretch (polar residues) spans 636–645 (RSNVTSRGKR).

Belongs to the glycosyl hydrolase 13 family. GlgB subfamily. In terms of assembly, monomer.

It carries out the reaction Transfers a segment of a (1-&gt;4)-alpha-D-glucan chain to a primary hydroxy group in a similar glucan chain.. It participates in glycan biosynthesis; glycogen biosynthesis. Its function is as follows. Catalyzes the formation of the alpha-1,6-glucosidic linkages in glycogen by scission of a 1,4-alpha-linked oligosaccharide from growing alpha-1,4-glucan chains and the subsequent attachment of the oligosaccharide to the alpha-1,6 position. This chain is 1,4-alpha-glucan branching enzyme GlgB, found in Bacillus cereus (strain Q1).